The primary structure comprises 269 residues: 3-methyl-2-oxobutanoate hydroxymethyltransferase (269 aa).

Residues Asp-43 and Asp-82 each contribute to the Mg(2+) site. 3-methyl-2-oxobutanoate-binding positions include Asp-43–Ser-44, Asp-82, and Lys-110. Position 112 (Glu-112) interacts with Mg(2+). The Proton acceptor role is filled by Glu-179.

This sequence belongs to the PanB family. In terms of assembly, homodecamer; pentamer of dimers. It depends on Mg(2+) as a cofactor.

The protein localises to the cytoplasm. It catalyses the reaction 3-methyl-2-oxobutanoate + (6R)-5,10-methylene-5,6,7,8-tetrahydrofolate + H2O = 2-dehydropantoate + (6S)-5,6,7,8-tetrahydrofolate. It participates in cofactor biosynthesis; (R)-pantothenate biosynthesis; (R)-pantoate from 3-methyl-2-oxobutanoate: step 1/2. Catalyzes the reversible reaction in which hydroxymethyl group from 5,10-methylenetetrahydrofolate is transferred onto alpha-ketoisovalerate to form ketopantoate. In Acinetobacter baumannii (strain SDF), this protein is 3-methyl-2-oxobutanoate hydroxymethyltransferase.